Consider the following 122-residue polypeptide: Lectin A (122 aa).

Ca(2+) is bound at residue tyrosine 38. An alpha-D-galactoside is bound by residues glutamate 44, glutamine 57, and aspartate 96. The Ca(2+) site is built by aspartate 96, threonine 100, aspartate 103, and asparagine 104. Aspartate 103 provides a ligand contact to an alpha-D-galactoside.

The protein belongs to the LecA/PllA lectin family. As to quaternary structure, homotetramer.

Its function is as follows. Lectin that specifically binds alpha-galactoside-terminating glycoconjugates. Shows high apparent binding to the alpha-Gal epitope (Gal-alpha-1,3-Gal-beta-1,4-GlcNAc terminating glycans) as well as to Gal-alpha-1,4-GlcNAc and Gal-alpha-1,3-GalNAc. Gal-alpha-1,3-GalNAc may be one natural ligand bound by PllA both in the nematode symbiont and in infected insects. This Photorhabdus laumondii subsp. laumondii (strain DSM 15139 / CIP 105565 / TT01) (Photorhabdus luminescens subsp. laumondii) protein is Lectin A.